Reading from the N-terminus, the 328-residue chain is dTDP-3,4-didehydro-2,6-dideoxy-alpha-D-glucose 3-reductase (328 aa).

Arg-20 provides a ligand contact to substrate. Residues 38-39, Leu-75, and His-80 each bind NADP(+); that span reads SR. The active-site Proton donor is Lys-98. NADP(+) contacts are provided by Arg-166 and Asp-178. Substrate is bound by residues Tyr-236 and Thr-256.

This sequence belongs to the Gfo/Idh/MocA family.

It catalyses the reaction dTDP-4-dehydro-2,6-dideoxy-alpha-D-glucose + NADP(+) = dTDP-3,4-didehydro-2,6-dideoxy-alpha-D-glucose + NADPH + H(+). Its pathway is antibiotic biosynthesis. Involved in the biosynthesis of one of the two 2,6-deoxysugars, dTDP-L-oleandrose, attached to the macrolactone ring oleandolide to produce the aglycone antibiotic oleandomycin. Catalyzes the reduction of the C-3 keto moiety of dTDP-3,4-diketo-2,6-dideoxy-alpha-D-glucose to yield dTDP-4-keto-2,6-dideoxy-alpha-D-glucose. NADPH is the better reductant, however NADH can also be used. In Streptomyces antibioticus, this protein is dTDP-3,4-didehydro-2,6-dideoxy-alpha-D-glucose 3-reductase.